Here is a 321-residue protein sequence, read N- to C-terminus: Isoaspartyl peptidase (321 aa).

The active-site Nucleophile is the Thr179. Substrate-binding positions include 207-210 (RVGD) and 230-233 (TGTG).

This sequence belongs to the Ntn-hydrolase family. As to quaternary structure, heterotetramer of two alpha and two beta chains arranged as a dimer of alpha/beta heterodimers. Post-translationally, autocleaved. Generates the alpha and beta subunits. The N-terminal residue of the beta subunit is thought to be responsible for the nucleophile hydrolase activity. In terms of processing, both subunits undergo further processing at their C-termini. The overexpressed alpha subunit seems to consist of residues 2-161, with an oxidized Met residue and a tightly coordinated Na(+), whereas the overexpressed beta subunit is processed to residue 315 and has 3 oxidized Met residues. Processing of the alpha subunit is inhibited by Zn(2+).

The catalysed reaction is Cleavage of a beta-linked Asp residue from the N-terminus of a polypeptide.. Degrades proteins damaged by L-isoaspartyl residue formation (also known as beta-Asp residues). Degrades L-isoaspartyl-containing di- and maybe also tripeptides. Also has L-asparaginase activity, although this may not be its principal function. Its function is as follows. May be involved in glutathione, and possibly other peptide, transport, although these results could also be due to polar effects of disruption. The sequence is that of Isoaspartyl peptidase (iaaA) from Escherichia coli (strain K12).